A 31-amino-acid chain; its full sequence is Cliotide T14 (31 aa).

The segment at residues 1–31 (DTIPCGESCVWIPCISSILGCSCKDKVCYHN) is a cross-link (cyclopeptide (Asp-Asn)). Cystine bridges form between cysteine 5–cysteine 21, cysteine 9–cysteine 23, and cysteine 14–cysteine 28.

Contains 3 disulfide bonds. In terms of processing, this is a cyclic peptide. Expressed in seed but not in root nodules.

Its function is as follows. Probably participates in a plant defense mechanism. Not active against Gram-negative bacterium E.coli ATCC 700926 or Gram-positive bacterium S.aureus ATCC 12600 up to a concentration of 100 uM under low-salt conditions. In Clitoria ternatea (Butterfly pea), this protein is Cliotide T14.